The sequence spans 183 residues: GTP cyclohydrolase 1 (183 aa).

Residues C71, H74, and C142 each contribute to the Zn(2+) site.

Belongs to the GTP cyclohydrolase I family. In terms of assembly, toroid-shaped homodecamer, composed of two pentamers of five dimers.

It catalyses the reaction GTP + H2O = 7,8-dihydroneopterin 3'-triphosphate + formate + H(+). It participates in cofactor biosynthesis; 7,8-dihydroneopterin triphosphate biosynthesis; 7,8-dihydroneopterin triphosphate from GTP: step 1/1. The sequence is that of GTP cyclohydrolase 1 from Leptospira borgpetersenii serovar Hardjo-bovis (strain JB197).